Consider the following 301-residue polypeptide: 4-diphosphocytidyl-2-C-methyl-D-erythritol kinase (301 aa).

The active site involves K18. Residue 109-119 coordinates ATP; it reads PIASGIGGGSA. D151 is a catalytic residue.

This sequence belongs to the GHMP kinase family. IspE subfamily.

It catalyses the reaction 4-CDP-2-C-methyl-D-erythritol + ATP = 4-CDP-2-C-methyl-D-erythritol 2-phosphate + ADP + H(+). It functions in the pathway isoprenoid biosynthesis; isopentenyl diphosphate biosynthesis via DXP pathway; isopentenyl diphosphate from 1-deoxy-D-xylulose 5-phosphate: step 3/6. In terms of biological role, catalyzes the phosphorylation of the position 2 hydroxy group of 4-diphosphocytidyl-2C-methyl-D-erythritol. The sequence is that of 4-diphosphocytidyl-2-C-methyl-D-erythritol kinase from Rhizobium meliloti (strain 1021) (Ensifer meliloti).